A 127-amino-acid chain; its full sequence is Fumarate reductase subunit C (127 aa).

Transmembrane regions (helical) follow at residues 30-50 (ATVL…GSLV), 67-87 (VVIA…HTFF), and 107-127 (IIVL…LIVV).

This sequence belongs to the FrdC family. As to quaternary structure, part of an enzyme complex containing four subunits: a flavoprotein (FrdA), an iron-sulfur protein (FrdB), and two hydrophobic anchor proteins (FrdC and FrdD).

It localises to the cell inner membrane. In terms of biological role, anchors the catalytic components of the fumarate reductase complex to the cell membrane, binds quinones. This chain is Fumarate reductase subunit C, found in Vibrio vulnificus (strain CMCP6).